Consider the following 350-residue polypeptide: Vetispiradiene synthase 3 (350 aa).

Mg(2+)-binding residues include Asp-103, Asp-107, Asp-246, Thr-250, and Glu-254. Positions 103-107 match the DDXXD motif motif; that stretch reads DDTFD.

This sequence belongs to the terpene synthase family. Tpsa subfamily. Mg(2+) serves as cofactor.

It is found in the cytoplasm. The enzyme catalyses (2E,6E)-farnesyl diphosphate = (-)-vetispiradiene + diphosphate. Its pathway is secondary metabolite biosynthesis; terpenoid biosynthesis. In terms of biological role, sesquiterpene synthase that catalyzes the formation of vetispiradiene from trans,trans-farnesyl diphosphate. The initial internal cyclization produces the monocyclic intermediate germacrene A. This Hyoscyamus muticus (Egyptian henbane) protein is Vetispiradiene synthase 3.